The chain runs to 1295 residues: Phosphoribosylformylglycinamidine synthase (1295 aa).

Residues Trp304–Lys326 are disordered. ATP-binding positions include Gly306–Asp317, Thr385–Tyr387, and Ala677. The Mg(2+) site is built by Asp678, Glu717, Asn721, and Asp884. A compositionally biased stretch (basic and acidic residues) spans Leu995–Asp1012. The segment at Leu995–Leu1017 is disordered. Residues Val1042 to Gly1295 form the Glutamine amidotransferase type-1 domain. Catalysis depends on Cys1135, which acts as the Nucleophile. Active-site residues include His1260 and Glu1262.

The protein in the N-terminal section; belongs to the FGAMS family. As to quaternary structure, monomer.

Its subcellular location is the cytoplasm. It catalyses the reaction N(2)-formyl-N(1)-(5-phospho-beta-D-ribosyl)glycinamide + L-glutamine + ATP + H2O = 2-formamido-N(1)-(5-O-phospho-beta-D-ribosyl)acetamidine + L-glutamate + ADP + phosphate + H(+). It participates in purine metabolism; IMP biosynthesis via de novo pathway; 5-amino-1-(5-phospho-D-ribosyl)imidazole from N(2)-formyl-N(1)-(5-phospho-D-ribosyl)glycinamide: step 1/2. Functionally, phosphoribosylformylglycinamidine synthase involved in the purines biosynthetic pathway. Catalyzes the ATP-dependent conversion of formylglycinamide ribonucleotide (FGAR) and glutamine to yield formylglycinamidine ribonucleotide (FGAM) and glutamate. The polypeptide is Phosphoribosylformylglycinamidine synthase (Sodalis glossinidius (strain morsitans)).